A 318-amino-acid polypeptide reads, in one-letter code: L-malyl-CoA/beta-methylmalyl-CoA lyase (318 aa).

Positions 19, 24, 30, and 76 each coordinate substrate. 2 residues coordinate Mg(2+): E141 and D168. Substrate contacts are provided by residues 167–168 and 251–252; these read AD and IH.

This sequence belongs to the HpcH/HpaI aldolase family. Homohexamer. Dimer of trimers. Requires Mg(2+) as cofactor. Mn(2+) is required as a cofactor.

The enzyme catalyses (S)-malyl-CoA = glyoxylate + acetyl-CoA. It catalyses the reaction (2R,3S)-beta-methylmalyl-CoA = propanoyl-CoA + glyoxylate. In terms of biological role, involved in the ethylmalonyl-CoA pathway for acetate assimilation. Catalyzes the reversible condensation of glyoxylate and acetyl-CoA to L-malyl-CoA and the reversible condensation of glyoxylate and propionyl-CoA to yield beta-methylmalyl-CoA. This is L-malyl-CoA/beta-methylmalyl-CoA lyase from Cereibacter sphaeroides (strain ATCC 17025 / ATH 2.4.3) (Rhodobacter sphaeroides).